A 273-amino-acid polypeptide reads, in one-letter code: Putative carboxypeptidase YodJ (273 aa).

Positions M1–G23 are cleaved as a signal peptide. Residue C24 is the site of N-palmitoyl cysteine attachment. C24 carries S-diacylglycerol cysteine lipidation. Residues S27–N58 are disordered. Basic and acidic residues predominate over residues A31–K53.

Belongs to the peptidase M15B family.

It localises to the cell membrane. The chain is Putative carboxypeptidase YodJ (yodJ) from Bacillus subtilis (strain 168).